Here is a 417-residue protein sequence, read N- to C-terminus: Gamma-glutamyl phosphate reductase (417 aa).

It belongs to the gamma-glutamyl phosphate reductase family.

The protein localises to the cytoplasm. The enzyme catalyses L-glutamate 5-semialdehyde + phosphate + NADP(+) = L-glutamyl 5-phosphate + NADPH + H(+). It participates in amino-acid biosynthesis; L-proline biosynthesis; L-glutamate 5-semialdehyde from L-glutamate: step 2/2. Functionally, catalyzes the NADPH-dependent reduction of L-glutamate 5-phosphate into L-glutamate 5-semialdehyde and phosphate. The product spontaneously undergoes cyclization to form 1-pyrroline-5-carboxylate. The protein is Gamma-glutamyl phosphate reductase of Escherichia coli O157:H7.